Here is a 295-residue protein sequence, read N- to C-terminus: uncharacterized protein (295 aa).

The region spanning 4–233 (IVVKSMAMEK…LQNTIERLVL (230 aa)) is the Sigma-54 factor interaction domain.

This is an uncharacterized protein from Pseudomonas sp. (strain NS671).